We begin with the raw amino-acid sequence, 244 residues long: Uridylate kinase (244 aa).

17 to 20 (KVSG) provides a ligand contact to ATP. The tract at residues 25–30 (GDKGFG) is involved in allosteric activation by GTP. G59 provides a ligand contact to UMP. G60 and R64 together coordinate ATP. UMP contacts are provided by residues D80 and 141–148 (VGNPFFTT). ATP is bound by residues T168, Q169, Y174, and D177.

Belongs to the UMP kinase family. As to quaternary structure, homohexamer.

The protein localises to the cytoplasm. It carries out the reaction UMP + ATP = UDP + ADP. It functions in the pathway pyrimidine metabolism; CTP biosynthesis via de novo pathway; UDP from UMP (UMPK route): step 1/1. With respect to regulation, allosterically activated by GTP. Inhibited by UTP. Functionally, catalyzes the reversible phosphorylation of UMP to UDP. The sequence is that of Uridylate kinase from Ehrlichia ruminantium (strain Welgevonden).